We begin with the raw amino-acid sequence, 562 residues long: Eukaryotic translation initiation factor 3 subunit L (562 aa).

One can recognise a PCI domain in the interval 329–535; it reads DAIRVFANIL…IHIADTKVAR (207 aa).

It belongs to the eIF-3 subunit L family. Component of the eukaryotic translation initiation factor 3 (eIF-3) complex, which is composed of 13 subunits: eif3a, eif3b, eif3c, eif3d, eif3e, eif3f, eif3g, eif3h, eif3i, eif3j, eif3k, eif3l and eif3m.

Its subcellular location is the cytoplasm. Its function is as follows. Component of the eukaryotic translation initiation factor 3 (eIF-3) complex, which is involved in protein synthesis of a specialized repertoire of mRNAs and, together with other initiation factors, stimulates binding of mRNA and methionyl-tRNAi to the 40S ribosome. The eIF-3 complex specifically targets and initiates translation of a subset of mRNAs involved in cell proliferation. This Xenopus tropicalis (Western clawed frog) protein is Eukaryotic translation initiation factor 3 subunit L (eif3l).